The primary structure comprises 302 residues: Ribose-5-phosphate isomerase (302 aa).

This sequence belongs to the ribose 5-phosphate isomerase family.

Its subcellular location is the cytoplasm. It carries out the reaction aldehydo-D-ribose 5-phosphate = D-ribulose 5-phosphate. It participates in carbohydrate degradation; pentose phosphate pathway; D-ribose 5-phosphate from D-ribulose 5-phosphate (non-oxidative stage): step 1/1. The sequence is that of Ribose-5-phosphate isomerase (RKI1) from Cryptococcus neoformans var. neoformans serotype D (strain B-3501A) (Filobasidiella neoformans).